A 427-amino-acid polypeptide reads, in one-letter code: Serine--tRNA ligase (427 aa).

Residue 231-233 coordinates L-serine; the sequence is TAE. Residue 262 to 264 coordinates ATP; it reads RSE. E285 contributes to the L-serine binding site. Residue 349–352 coordinates ATP; the sequence is EISS. Position 385 (S385) interacts with L-serine.

Belongs to the class-II aminoacyl-tRNA synthetase family. Type-1 seryl-tRNA synthetase subfamily. In terms of assembly, homodimer. The tRNA molecule binds across the dimer.

The protein localises to the cytoplasm. It catalyses the reaction tRNA(Ser) + L-serine + ATP = L-seryl-tRNA(Ser) + AMP + diphosphate + H(+). The catalysed reaction is tRNA(Sec) + L-serine + ATP = L-seryl-tRNA(Sec) + AMP + diphosphate + H(+). Its pathway is aminoacyl-tRNA biosynthesis; selenocysteinyl-tRNA(Sec) biosynthesis; L-seryl-tRNA(Sec) from L-serine and tRNA(Sec): step 1/1. In terms of biological role, catalyzes the attachment of serine to tRNA(Ser). Is also able to aminoacylate tRNA(Sec) with serine, to form the misacylated tRNA L-seryl-tRNA(Sec), which will be further converted into selenocysteinyl-tRNA(Sec). The sequence is that of Serine--tRNA ligase from Staphylococcus saprophyticus subsp. saprophyticus (strain ATCC 15305 / DSM 20229 / NCIMB 8711 / NCTC 7292 / S-41).